We begin with the raw amino-acid sequence, 332 residues long: Methionyl-tRNA formyltransferase (332 aa).

A (6S)-5,6,7,8-tetrahydrofolate-binding site is contributed by 124–127 (SLLP).

It belongs to the Fmt family.

The catalysed reaction is L-methionyl-tRNA(fMet) + (6R)-10-formyltetrahydrofolate = N-formyl-L-methionyl-tRNA(fMet) + (6S)-5,6,7,8-tetrahydrofolate + H(+). Functionally, attaches a formyl group to the free amino group of methionyl-tRNA(fMet). The formyl group appears to play a dual role in the initiator identity of N-formylmethionyl-tRNA by promoting its recognition by IF2 and preventing the misappropriation of this tRNA by the elongation apparatus. This Polynucleobacter necessarius subsp. necessarius (strain STIR1) protein is Methionyl-tRNA formyltransferase.